Reading from the N-terminus, the 1372-residue chain is uncharacterized protein (1372 aa).

The interval 1–67 (MEATDQEVML…PPAPSKNPMQ (67 aa)) is disordered. A compositionally biased stretch (polar residues) spans 17 to 28 (MSTSATSSTNGG). A coiled-coil region spans residues 75–143 (NLYQTAQEQL…LEEHDRLRRK (69 aa)). Disordered stretches follow at residues 178–199 (NDLS…LSGD), 238–287 (HINR…QASS), 380–414 (EVSN…EVRR), 427–447 (QSLE…VPVP), and 486–531 (EERM…DSGI). Composition is skewed to low complexity over residues 184–198 (GIGT…SLSG) and 238–251 (HINR…HGNG). Composition is skewed to polar residues over residues 257 to 287 (TGPS…QASS) and 399 to 408 (TNGNSATTAP). The stretch at 409–438 (KSEVRRLSGDISSIRDRMQSLEQQRKAFSS) forms a coiled coil. Positions 486–499 (EERMRQQQQKEKHS) are enriched in basic and acidic residues. A compositionally biased stretch (low complexity) spans 514–523 (ALIIEEPPVA). Residues 539 to 580 (LQQQQQLNAAIAALALEERQLEEAANAVNQIEAEFDELTDLH) are a coiled coil. The segment covering 652-673 (VSKSGPTPNPTSTPNMVSSSPN) has biased composition (low complexity). 5 disordered regions span residues 652 to 679 (VSKS…LRRK), 799 to 820 (SRQL…RSEH), 860 to 897 (SQSD…PKRV), 1151 to 1181 (SSQM…PIPK), and 1231 to 1250 (SPPS…SPTK). 2 stretches are compositionally biased toward polar residues: residues 860-871 (SQSDSKSLTSPI) and 1151-1160 (SSQMMKTSLP).

This is an uncharacterized protein from Drosophila melanogaster (Fruit fly).